A 115-amino-acid polypeptide reads, in one-letter code: UPF0102 protein NMA0341 (115 aa).

It belongs to the UPF0102 family.

This chain is UPF0102 protein NMA0341, found in Neisseria meningitidis serogroup A / serotype 4A (strain DSM 15465 / Z2491).